We begin with the raw amino-acid sequence, 625 residues long: MNAAPTVLQQQAQSLSEAVTQPIPGSRKIFVQGSRADLQVPMREIALTRTPTLFGGEENPPLSVYDTSGPYTDPQVAIDLAVGLAPLRAHWIAERGDTVALDGLSSSFGRGREHDARLDAVRFPARRLPRVAREGANVTQMHYARRGIITPEMEYVAIRENQRLEAVTDASLRKQHPGEAFGASIQQRITPEFVREEIARGRAILPNNINHPESEPMIIGRNFLTKINANIGNSAVSSGIAEEVEKLVWSIRWGGDTVMDLSTGKHIHETREWIIRNSPVPIGTVPIYQALEKVDGRAEALTWEIFRDTLIEQAEQGVDYFTIHAGVLLRYVPLTAKRVTGIVSRGGSIMAKWCLAHHKENFLYTHFEDICQIMKAYDVAFSLGDGLRPGCIADANDAAQFGELETLGELTKLAWKHDVQTMIEGPGHVPMQLIKENMDKQLRECGEAPFYTLGPLTTDIAPGYDHITSAIGAAMIGWFGTAMLCYVTPKEHLGLPNRQDVRDGIMAYKIAAHAADLAKGHPGAQVRDNALSKARFEFRWDDQFHLGLDPEKAKEFHDETLPKDAHKLAHFCSMCGPHFCSMKITQDVRDYAAEHGMDDAQALSTGMQEKSAQFLAQGAQVYRPM.

Substrate contacts are provided by residues Asn-230, Met-259, Tyr-288, His-324, 344 to 346 (SRG), 385 to 388 (DGLR), and Glu-424. Position 428 (His-428) interacts with Zn(2+). Position 451 (Tyr-451) interacts with substrate. Residue His-492 participates in Zn(2+) binding. Residues Cys-572, Cys-575, and Cys-580 each contribute to the [4Fe-4S] cluster site.

The protein belongs to the ThiC family. In terms of assembly, homodimer. Requires [4Fe-4S] cluster as cofactor.

The catalysed reaction is 5-amino-1-(5-phospho-beta-D-ribosyl)imidazole + S-adenosyl-L-methionine = 4-amino-2-methyl-5-(phosphooxymethyl)pyrimidine + CO + 5'-deoxyadenosine + formate + L-methionine + 3 H(+). It participates in cofactor biosynthesis; thiamine diphosphate biosynthesis. Its function is as follows. Catalyzes the synthesis of the hydroxymethylpyrimidine phosphate (HMP-P) moiety of thiamine from aminoimidazole ribotide (AIR) in a radical S-adenosyl-L-methionine (SAM)-dependent reaction. In Xanthomonas oryzae pv. oryzae (strain MAFF 311018), this protein is Phosphomethylpyrimidine synthase.